Consider the following 745-residue polypeptide: Multiple C2 domain and transmembrane region protein 13 (745 aa).

Residues 1-30 (MAANKDEFSVKQISPKLGGERGARNPYGPT) are disordered. C2 domains lie at 21–139 (RGAR…PQRY), 171–293 (DASE…SAPA), and 326–453 (AEES…ACSY). Ca(2+)-binding residues include Asp-56, Asp-61, Asp-106, and Asn-110. The next 2 helical transmembrane spans lie at 568 to 588 (SLIV…LVGL) and 688 to 708 (FYCW…PMWL).

Belongs to the MCTP family. It depends on Ca(2+) as a cofactor. As to expression, expressed in incipient leaf primordia.

Its subcellular location is the cell membrane. It localises to the cytoplasm. Functionally, may function as a signaling molecule by regulating the trafficking of other regulators. This Arabidopsis thaliana (Mouse-ear cress) protein is Multiple C2 domain and transmembrane region protein 13.